Consider the following 327-residue polypeptide: 2-oxoisovalerate dehydrogenase subunit beta (327 aa).

Thiamine diphosphate is bound by residues Glu29, 58–60 (LAE), Gln82, and 86–89 (FIMP). Substrate contacts are provided by residues 83–86 (FADF) and His129. The active-site Proton acceptor is His129.

As to quaternary structure, heterotetramer of two alpha and two beta chains. Directly associated with ODBA in the E1 complex. It depends on thiamine diphosphate as a cofactor.

The enzyme catalyses N(6)-[(R)-lipoyl]-L-lysyl-[protein] + 3-methyl-2-oxobutanoate + H(+) = N(6)-[(R)-S(8)-2-methylpropanoyldihydrolipoyl]-L-lysyl-[protein] + CO2. In terms of biological role, the branched-chain alpha-keto dehydrogenase complex catalyzes the overall conversion of alpha-keto acids to acyl-CoA and CO(2). It contains multiple copies of three enzymatic components: branched-chain alpha-keto acid decarboxylase (E1), lipoamide acyltransferase (E2) and lipoamide dehydrogenase (E3). The protein is 2-oxoisovalerate dehydrogenase subunit beta (bfmBAB) of Bacillus subtilis (strain 168).